The following is a 183-amino-acid chain: UPF0725 protein At4g11700 (183 aa).

It belongs to the UPF0725 (EMB2204) family.

This chain is UPF0725 protein At4g11700, found in Arabidopsis thaliana (Mouse-ear cress).